The following is a 178-amino-acid chain: Ribosome maturation factor RimP (178 aa).

The protein belongs to the RimP family.

It localises to the cytoplasm. In terms of biological role, required for maturation of 30S ribosomal subunits. The chain is Ribosome maturation factor RimP from Mycolicibacterium paratuberculosis (strain ATCC BAA-968 / K-10) (Mycobacterium paratuberculosis).